The chain runs to 253 residues: Vitamin B12 import ATP-binding protein BtuD (253 aa).

An ABC transporter domain is found at 1–236 (MTNQLMALNQ…NTLSRVFAAD (236 aa)). 34–41 (GPNGSGKS) lines the ATP pocket.

The protein belongs to the ABC transporter superfamily. Vitamin B12 importer (TC 3.A.1.13.1) family. The complex is composed of two ATP-binding proteins (BtuD), two transmembrane proteins (BtuC) and a solute-binding protein (BtuF).

It is found in the cell inner membrane. The catalysed reaction is an R-cob(III)alamin(out) + ATP + H2O = an R-cob(III)alamin(in) + ADP + phosphate + H(+). Functionally, part of the ABC transporter complex BtuCDF involved in vitamin B12 import. Responsible for energy coupling to the transport system. The protein is Vitamin B12 import ATP-binding protein BtuD of Photorhabdus laumondii subsp. laumondii (strain DSM 15139 / CIP 105565 / TT01) (Photorhabdus luminescens subsp. laumondii).